Here is a 361-residue protein sequence, read N- to C-terminus: 3-dehydroquinate synthase (361 aa).

NAD(+) contacts are provided by residues 70–75, 104–108, 128–129, Lys141, and Lys150; these read DGEQHK, GVVGD, and TT. Glu183, His246, and His263 together coordinate Zn(2+).

This sequence belongs to the sugar phosphate cyclases superfamily. Dehydroquinate synthase family. The cofactor is Co(2+). It depends on Zn(2+) as a cofactor. NAD(+) is required as a cofactor.

The protein localises to the cytoplasm. The catalysed reaction is 7-phospho-2-dehydro-3-deoxy-D-arabino-heptonate = 3-dehydroquinate + phosphate. The protein operates within metabolic intermediate biosynthesis; chorismate biosynthesis; chorismate from D-erythrose 4-phosphate and phosphoenolpyruvate: step 2/7. Functionally, catalyzes the conversion of 3-deoxy-D-arabino-heptulosonate 7-phosphate (DAHP) to dehydroquinate (DHQ). This Teredinibacter turnerae (strain ATCC 39867 / T7901) protein is 3-dehydroquinate synthase.